We begin with the raw amino-acid sequence, 250 residues long: Nuclear transcription factor Y subunit C-4 (250 aa).

The segment at 219–250 is disordered; that stretch reads GIAYGGQQGHPGYLWQDPQEQQEEPPAEQQSD. The segment covering 238–250 has biased composition (acidic residues); it reads EQQEEPPAEQQSD.

This sequence belongs to the NFYC/HAP5 subunit family. Heterotrimeric transcription factor composed of three components, NF-YA, NF-YB and NF-YC. NF-YB and NF-YC must interact and dimerize for NF-YA association and DNA binding. Interacts with NFYB2. Interacts with NFYB8, NFYB10 and HD5/NFYB11.

The protein resides in the nucleus. The protein localises to the cytoplasm. Probable transcription factor involved in the regulation of flowering time under long day (LD) conditions. Functions as a repressor of flowering, independently of HD1 and GHD7. Controls flowering time by negatively regulating the expression of EHD1 and HD3A. Component of the NF-Y/HAP transcription factor complex. The sequence is that of Nuclear transcription factor Y subunit C-4 from Oryza sativa subsp. japonica (Rice).